Consider the following 165-residue polypeptide: Pyruvoyl-dependent arginine decarboxylase 1 (165 aa).

A Pyruvic acid (Ser) modification is found at S45.

Belongs to the PdaD family. It depends on pyruvate as a cofactor.

The catalysed reaction is L-arginine + H(+) = agmatine + CO2. The chain is Pyruvoyl-dependent arginine decarboxylase 1 (pdaD1) from Methanosarcina acetivorans (strain ATCC 35395 / DSM 2834 / JCM 12185 / C2A).